Here is a 706-residue protein sequence, read N- to C-terminus: Choline transporter-like protein 2 (706 aa).

The Cytoplasmic segment spans residues 1-32; it reads MMELEGEKPNYGEPRKYDPTFKGPIYNRGCTD. The helical transmembrane segment at 33–53 threads the bilayer; sequence IVCCIFFIICILGYVAVGILA. Residues 54–232 lie on the Extracellular side of the membrane; the sequence is WSQGDPRKVI…KIFEDYTQSW (179 aa). 2 N-linked (GlcNAc...) asparagine glycosylation sites follow: Asn-187 and Asn-210. The chain crosses the membrane as a helical span at residues 233-253; the sequence is YWILIGLVIAMLISLLFIVLL. Topologically, residues 254–256 are cytoplasmic; it reads RFL. A helical membrane pass occupies residues 257–277; it reads AGIMVWVMIVMVILVIGYGIF. Over 278-315 the chain is Extracellular; sequence HCSMEYVSLKSEAGSNVTLKDLGFQTDFSVYLHIRQTW. Residue Asn-293 is glycosylated (N-linked (GlcNAc...) asparagine). A helical transmembrane segment spans residues 316-336; the sequence is LAFIIILAIVEVVIILLLIFL. Residues 337 to 364 lie on the Cytoplasmic side of the membrane; it reads RNRILIAIALIKEASRAIGYVMSALFYP. The chain crosses the membrane as a helical span at residues 365–385; it reads LFTFALLSIVIAYWAVTAVFL. Residues 386 to 454 are Extracellular-facing; the sequence is STSNQPIYKV…LQFYNVFLFF (69 aa). Asn-397 and Asn-412 each carry an N-linked (GlcNAc...) asparagine glycan. The chain crosses the membrane as a helical span at residues 455-477; sequence WCANFVTALGQMTLAGAFASYYW. The Cytoplasmic segment spans residues 478-504; sequence ALVKPDDMPAFPIFSSLGRSLRYHTGS. Residues 505–525 traverse the membrane as a helical segment; the sequence is LAFGSLILSIIQIIRVLLEYI. Topologically, residues 526–599 are extracellular; it reads DHKLQGTQNK…RVAVLDKVTD (74 aa). A helical membrane pass occupies residues 600-620; the sequence is FLLFLGKLLIVGLVGIFAFFF. Residues 621 to 638 lie on the Cytoplasmic side of the membrane; it reads FSGRVKAFENTAPNLHYY. A helical transmembrane segment spans residues 639 to 659; the sequence is WVPILTVVVGSYLIAHGFFSV. Over 660–706 the chain is Extracellular; the sequence is YAMCVDTLFLCFLEDLERNDGSAERPYLMSDRLLKVLNKKNKPEPAE.

Belongs to the CTL (choline transporter-like) family.

It localises to the cell membrane. Its subcellular location is the mitochondrion outer membrane. It catalyses the reaction choline(out) + n H(+)(in) = choline(in) + n H(+)(out). The enzyme catalyses ethanolamine(out) + n H(+)(in) = ethanolamine(in) + n H(+)(out). In terms of biological role, choline/H+ antiporter, mainly in mitochodria. Also acts as a low-affinity ethanolamine/H+ antiporter, regulating the supply of extracellular ethanolamine (Etn) for the CDP-Etn pathway, redistribute intracellular Etn and balance the CDP-Cho and CDP-Etn arms of the Kennedy pathway. This Salmo salar (Atlantic salmon) protein is Choline transporter-like protein 2 (slc44a2).